We begin with the raw amino-acid sequence, 804 residues long: Leucine--tRNA ligase (804 aa).

Positions 40-51 (PYPSGAGLHVGH) match the 'HIGH' region motif. The 'KMSKS' region signature appears at 576–580 (KMSKS). Residue Lys579 coordinates ATP.

It belongs to the class-I aminoacyl-tRNA synthetase family.

It is found in the cytoplasm. The catalysed reaction is tRNA(Leu) + L-leucine + ATP = L-leucyl-tRNA(Leu) + AMP + diphosphate. This chain is Leucine--tRNA ligase, found in Bacillus licheniformis (strain ATCC 14580 / DSM 13 / JCM 2505 / CCUG 7422 / NBRC 12200 / NCIMB 9375 / NCTC 10341 / NRRL NRS-1264 / Gibson 46).